The following is a 785-amino-acid chain: Phenylalanine--tRNA ligase beta subunit (785 aa).

Positions 39–150 (RTWAAGVVVG…ASLPLGLDVG (112 aa)) constitute a tRNA-binding domain. Residues 400–476 (RENRVVSLRP…RVVGYDRFAP (77 aa)) form the B5 domain. Mg(2+)-binding residues include aspartate 454, aspartate 460, glutamate 463, and glutamate 464. The FDX-ACB domain maps to 692 to 784 (SPFPPAARDL…LAERYSVDLR (93 aa)).

The protein belongs to the phenylalanyl-tRNA synthetase beta subunit family. Type 1 subfamily. In terms of assembly, tetramer of two alpha and two beta subunits. The cofactor is Mg(2+).

The protein localises to the cytoplasm. The catalysed reaction is tRNA(Phe) + L-phenylalanine + ATP = L-phenylalanyl-tRNA(Phe) + AMP + diphosphate + H(+). This chain is Phenylalanine--tRNA ligase beta subunit, found in Gloeobacter violaceus (strain ATCC 29082 / PCC 7421).